Here is a 205-residue protein sequence, read N- to C-terminus: Outer-membrane lipoprotein LolB (205 aa).

The N-terminal stretch at 1-17 (MRLRLFLAASALALLSG) is a signal peptide. Cys-18 carries N-palmitoyl cysteine lipidation. A lipid anchor (S-diacylglycerol cysteine) is attached at Cys-18.

The protein belongs to the LolB family. Monomer.

It is found in the cell outer membrane. Functionally, plays a critical role in the incorporation of lipoproteins in the outer membrane after they are released by the LolA protein. This Pseudomonas aeruginosa (strain LESB58) protein is Outer-membrane lipoprotein LolB.